The chain runs to 1240 residues: Pectate lyase L (1240 aa).

The first 26 residues, Met-1 to Ala-26, serve as a signal peptide directing secretion. Has catalytic activity regions lie at residues Glu-27–Arg-551 and Thr-545–Lys-1240. Positions 325, 349, 350, 1049, 1073, 1074, and 1077 each coordinate Ca(2+). The active-site Proton acceptor is the Lys-1117.

It belongs to the polysaccharide lyase 9 family. Ca(2+) is required as a cofactor.

It localises to the secreted. The enzyme catalyses Eliminative cleavage of (1-&gt;4)-alpha-D-galacturonan to give oligosaccharides with 4-deoxy-alpha-D-galact-4-enuronosyl groups at their non-reducing ends.. Its activity is regulated as follows. Inhibited by the metal chelator ethylenediaminetetraacetic acid (EDTA). Cleaves polygalacturonate or partially methylated pectin. When assayed on polygalacturonate or on pectin, it releases monogalacturonate as the principal product. This is Pectate lyase L from Thermoclostridium stercorarium (Clostridium stercorarium).